The chain runs to 390 residues: Queuine tRNA-ribosyltransferase (390 aa).

The active-site Proton acceptor is aspartate 92. Substrate-binding positions include 92 to 96, aspartate 146, glutamine 195, and glycine 222; that span reads DSGGF. The tract at residues 253 to 259 is RNA binding; sequence GVGTPED. Catalysis depends on aspartate 272, which acts as the Nucleophile. The segment at 277 to 281 is RNA binding; important for wobble base 34 recognition; that stretch reads TRNAR. Zn(2+)-binding residues include cysteine 310, cysteine 312, cysteine 315, and histidine 354.

This sequence belongs to the queuine tRNA-ribosyltransferase family. As to quaternary structure, homodimer. Within each dimer, one monomer is responsible for RNA recognition and catalysis, while the other monomer binds to the replacement base PreQ1. Zn(2+) serves as cofactor.

The catalysed reaction is 7-aminomethyl-7-carbaguanine + guanosine(34) in tRNA = 7-aminomethyl-7-carbaguanosine(34) in tRNA + guanine. The protein operates within tRNA modification; tRNA-queuosine biosynthesis. Functionally, catalyzes the base-exchange of a guanine (G) residue with the queuine precursor 7-aminomethyl-7-deazaguanine (PreQ1) at position 34 (anticodon wobble position) in tRNAs with GU(N) anticodons (tRNA-Asp, -Asn, -His and -Tyr). Catalysis occurs through a double-displacement mechanism. The nucleophile active site attacks the C1' of nucleotide 34 to detach the guanine base from the RNA, forming a covalent enzyme-RNA intermediate. The proton acceptor active site deprotonates the incoming PreQ1, allowing a nucleophilic attack on the C1' of the ribose to form the product. After dissociation, two additional enzymatic reactions on the tRNA convert PreQ1 to queuine (Q), resulting in the hypermodified nucleoside queuosine (7-(((4,5-cis-dihydroxy-2-cyclopenten-1-yl)amino)methyl)-7-deazaguanosine). This chain is Queuine tRNA-ribosyltransferase, found in Verminephrobacter eiseniae (strain EF01-2).